The chain runs to 330 residues: MALPVYYDKDIDLGVIQSLQVGIIGYGVQGEAQALNLRDSKVKVRIGLYQGSLSVSKAKKEGFEVLGVKELVQQSDVIMALLPDELHKEVLEKEVIPFLKEGQIIGFAHGFSVHFNQVVLPKGVGAILVAPKGPGSALREEYLKNRGLYHLIAIEQESSIHNAKAVALSYAKAMGGGRMGVLETSFKEECESDLFGEQAVLCGGLEAIVRMGFETLIKAGYPEELAYFECVHEVKLVADLLHYKGVEGLRKHISNTAEFGAIKAREPMGNLLEKRMQKILKKIQNGAFAKDFLLEKSLNYPRLNTERKALKETKIEQIGEILRAPFNHKK.

One can recognise a KARI N-terminal Rossmann domain in the interval 3-184; the sequence is LPVYYDKDID…GGGRMGVLET (182 aa). Residues 26–29, Ser-52, and Ser-54 each bind NADP(+); that span reads YGVQ. His-109 is an active-site residue. Gly-135 serves as a coordination point for NADP(+). The KARI C-terminal knotted domain occupies 185-329; the sequence is SFKEECESDL…EILRAPFNHK (145 aa). Mg(2+)-binding residues include Asp-193, Glu-197, Glu-229, and Glu-233. A substrate-binding site is contributed by Ser-254.

It belongs to the ketol-acid reductoisomerase family. Mg(2+) is required as a cofactor.

The catalysed reaction is (2R)-2,3-dihydroxy-3-methylbutanoate + NADP(+) = (2S)-2-acetolactate + NADPH + H(+). It catalyses the reaction (2R,3R)-2,3-dihydroxy-3-methylpentanoate + NADP(+) = (S)-2-ethyl-2-hydroxy-3-oxobutanoate + NADPH + H(+). The protein operates within amino-acid biosynthesis; L-isoleucine biosynthesis; L-isoleucine from 2-oxobutanoate: step 2/4. It participates in amino-acid biosynthesis; L-valine biosynthesis; L-valine from pyruvate: step 2/4. In terms of biological role, involved in the biosynthesis of branched-chain amino acids (BCAA). Catalyzes an alkyl-migration followed by a ketol-acid reduction of (S)-2-acetolactate (S2AL) to yield (R)-2,3-dihydroxy-isovalerate. In the isomerase reaction, S2AL is rearranged via a Mg-dependent methyl migration to produce 3-hydroxy-3-methyl-2-ketobutyrate (HMKB). In the reductase reaction, this 2-ketoacid undergoes a metal-dependent reduction by NADPH to yield (R)-2,3-dihydroxy-isovalerate. This Helicobacter pylori (strain J99 / ATCC 700824) (Campylobacter pylori J99) protein is Ketol-acid reductoisomerase (NADP(+)).